Reading from the N-terminus, the 114-residue chain is Vacuolar morphogenesis protein 10 (114 aa).

Its subcellular location is the vacuole membrane. Its function is as follows. Required for vacuolar fusion. Involved in the early steps of the fusion pathway. This is Vacuolar morphogenesis protein 10 (VAM10) from Saccharomyces cerevisiae (strain ATCC 204508 / S288c) (Baker's yeast).